A 421-amino-acid polypeptide reads, in one-letter code: Serine hydroxymethyltransferase (421 aa).

(6S)-5,6,7,8-tetrahydrofolate contacts are provided by residues Leu118 and Gly122 to Leu124. The residue at position 226 (Lys226) is an N6-(pyridoxal phosphate)lysine. Position 242 (Glu242) interacts with (6S)-5,6,7,8-tetrahydrofolate.

Belongs to the SHMT family. Homodimer. The cofactor is pyridoxal 5'-phosphate.

It localises to the cytoplasm. The catalysed reaction is (6R)-5,10-methylene-5,6,7,8-tetrahydrofolate + glycine + H2O = (6S)-5,6,7,8-tetrahydrofolate + L-serine. Its pathway is one-carbon metabolism; tetrahydrofolate interconversion. It functions in the pathway amino-acid biosynthesis; glycine biosynthesis; glycine from L-serine: step 1/1. Its function is as follows. Catalyzes the reversible interconversion of serine and glycine with tetrahydrofolate (THF) serving as the one-carbon carrier. This reaction serves as the major source of one-carbon groups required for the biosynthesis of purines, thymidylate, methionine, and other important biomolecules. Also exhibits THF-independent aldolase activity toward beta-hydroxyamino acids, producing glycine and aldehydes, via a retro-aldol mechanism. In Mycoplasmopsis synoviae (strain 53) (Mycoplasma synoviae), this protein is Serine hydroxymethyltransferase.